The following is a 264-amino-acid chain: Thymidylate synthase (264 aa).

Arg21 contacts dUMP. His51 is a binding site for (6R)-5,10-methylene-5,6,7,8-tetrahydrofolate. Position 126-127 (126-127) interacts with dUMP; it reads RR. The active-site Nucleophile is Cys146. DUMP contacts are provided by residues 166 to 169, Asn177, and 207 to 209; these read RSAD and HIY. Residue Asp169 coordinates (6R)-5,10-methylene-5,6,7,8-tetrahydrofolate. Residue Ser263 coordinates (6R)-5,10-methylene-5,6,7,8-tetrahydrofolate.

It belongs to the thymidylate synthase family. Bacterial-type ThyA subfamily. Homodimer.

The protein localises to the cytoplasm. It catalyses the reaction dUMP + (6R)-5,10-methylene-5,6,7,8-tetrahydrofolate = 7,8-dihydrofolate + dTMP. Its pathway is pyrimidine metabolism; dTTP biosynthesis. In terms of biological role, catalyzes the reductive methylation of 2'-deoxyuridine-5'-monophosphate (dUMP) to 2'-deoxythymidine-5'-monophosphate (dTMP) while utilizing 5,10-methylenetetrahydrofolate (mTHF) as the methyl donor and reductant in the reaction, yielding dihydrofolate (DHF) as a by-product. This enzymatic reaction provides an intracellular de novo source of dTMP, an essential precursor for DNA biosynthesis. In Bacillus velezensis (strain DSM 23117 / BGSC 10A6 / LMG 26770 / FZB42) (Bacillus amyloliquefaciens subsp. plantarum), this protein is Thymidylate synthase.